The following is a 591-amino-acid chain: L-fucose isomerase (591 aa).

Active-site proton acceptor residues include Glu-337 and Asp-361. 3 residues coordinate Mn(2+): Glu-337, Asp-361, and His-528.

This sequence belongs to the L-fucose isomerase family. In terms of assembly, homohexamer. It depends on Mn(2+) as a cofactor.

It is found in the cytoplasm. The enzyme catalyses L-fucose = L-fuculose. It participates in carbohydrate degradation; L-fucose degradation; L-lactaldehyde and glycerone phosphate from L-fucose: step 1/3. Its function is as follows. Converts the aldose L-fucose into the corresponding ketose L-fuculose. This is L-fucose isomerase from Escherichia coli (strain 55989 / EAEC).